A 144-amino-acid polypeptide reads, in one-letter code: Urease subunit beta (144 aa).

It belongs to the urease beta subunit family. As to quaternary structure, heterotrimer of UreA (gamma), UreB (beta) and UreC (alpha) subunits. Three heterotrimers associate to form the active enzyme.

Its subcellular location is the cytoplasm. It carries out the reaction urea + 2 H2O + H(+) = hydrogencarbonate + 2 NH4(+). The protein operates within nitrogen metabolism; urea degradation; CO(2) and NH(3) from urea (urease route): step 1/1. The chain is Urease subunit beta from Yersinia pseudotuberculosis serotype O:1b (strain IP 31758).